Consider the following 107-residue polypeptide: Integration host factor subunit alpha (107 aa).

The protein belongs to the bacterial histone-like protein family. As to quaternary structure, heterodimer of an alpha and a beta chain.

Functionally, this protein is one of the two subunits of integration host factor, a specific DNA-binding protein that functions in genetic recombination as well as in transcriptional and translational control. In Bartonella tribocorum (strain CIP 105476 / IBS 506), this protein is Integration host factor subunit alpha.